The sequence spans 642 residues: Threonine--tRNA ligase (642 aa).

The TGS domain occupies 1–61 (MPVITLPDGS…SEDANLVIFT (61 aa)). Residues 243 to 534 (DHRKLAKKFD…LIEHYEGSFP (292 aa)) form a catalytic region. 3 residues coordinate Zn(2+): cysteine 334, histidine 385, and histidine 511.

This sequence belongs to the class-II aminoacyl-tRNA synthetase family. As to quaternary structure, homodimer. The cofactor is Zn(2+).

The protein localises to the cytoplasm. It catalyses the reaction tRNA(Thr) + L-threonine + ATP = L-threonyl-tRNA(Thr) + AMP + diphosphate + H(+). Catalyzes the attachment of threonine to tRNA(Thr) in a two-step reaction: L-threonine is first activated by ATP to form Thr-AMP and then transferred to the acceptor end of tRNA(Thr). Also edits incorrectly charged L-seryl-tRNA(Thr). The polypeptide is Threonine--tRNA ligase (Cellvibrio japonicus (strain Ueda107) (Pseudomonas fluorescens subsp. cellulosa)).